Reading from the N-terminus, the 427-residue chain is Probable glucuronosyltransferase Os03g0107900 (427 aa).

Residues 1-33 (MAMRGDPKQRRASASAPHGGAAHHVADKLRRHS) lie on the Cytoplasmic side of the membrane. Residues 34–54 (TFLLLLLLLWFALSLYLFLSA) traverse the membrane as a helical; Signal-anchor for type II membrane protein segment. Over 55-427 (TPPPPRPAFL…QRRHVESWKR (373 aa)) the chain is Lumenal. N-linked (GlcNAc...) asparagine glycans are attached at residues N136, N168, N264, and N374.

This sequence belongs to the glycosyltransferase 47 family.

The protein resides in the golgi apparatus membrane. Functionally, involved in the synthesis of glucuronoxylan hemicellulose in secondary cell walls. In Oryza sativa subsp. japonica (Rice), this protein is Probable glucuronosyltransferase Os03g0107900.